A 394-amino-acid polypeptide reads, in one-letter code: Chalcone synthase 2 (394 aa).

C167 is a catalytic residue.

It belongs to the thiolase-like superfamily. Chalcone/stilbene synthases family.

The catalysed reaction is (E)-4-coumaroyl-CoA + 3 malonyl-CoA + 3 H(+) = 2',4,4',6'-tetrahydroxychalcone + 3 CO2 + 4 CoA. Its pathway is secondary metabolite biosynthesis; flavonoid biosynthesis. In terms of biological role, the primary product of this enzyme is 4,2',4',6'-tetrahydroxychalcone (also termed naringenin-chalcone or chalcone) which can under specific conditions spontaneously isomerize into naringenin. The chain is Chalcone synthase 2 (CHS2) from Secale cereale (Rye).